The chain runs to 340 residues: Glycerol-3-phosphate dehydrogenase [NAD(P)+] (340 aa).

The NADPH site is built by W11, R33, and K110. Positions 110, 144, and 146 each coordinate sn-glycerol 3-phosphate. A148 provides a ligand contact to NADPH. The sn-glycerol 3-phosphate site is built by K199, D252, S262, R263, and N264. The active-site Proton acceptor is the K199. Residue R263 coordinates NADPH. NADPH contacts are provided by V287 and E289.

Belongs to the NAD-dependent glycerol-3-phosphate dehydrogenase family.

It localises to the cytoplasm. The enzyme catalyses sn-glycerol 3-phosphate + NAD(+) = dihydroxyacetone phosphate + NADH + H(+). It carries out the reaction sn-glycerol 3-phosphate + NADP(+) = dihydroxyacetone phosphate + NADPH + H(+). Its pathway is membrane lipid metabolism; glycerophospholipid metabolism. In terms of biological role, catalyzes the reduction of the glycolytic intermediate dihydroxyacetone phosphate (DHAP) to sn-glycerol 3-phosphate (G3P), the key precursor for phospholipid synthesis. The sequence is that of Glycerol-3-phosphate dehydrogenase [NAD(P)+] from Polynucleobacter asymbioticus (strain DSM 18221 / CIP 109841 / QLW-P1DMWA-1) (Polynucleobacter necessarius subsp. asymbioticus).